We begin with the raw amino-acid sequence, 298 residues long: MEGVIVPLVTPFKEDYSIDFEALEWHIEFLEDKGVHGIFTNSTTGEFTSLSFEEKKLLAEKGRELTSKAYYLVGTGSTNTFEVIELTKHAKDIGADATVIVSPYYCKLKDEAIFRHFSIVAERADIPIILYAIPSCANPINVEIVRKLALEHSNIIGIKASVDSLTYLGELLEVKEERKDFKVFTGLDQYFFTLLTLGGDGGIMACANFAPEIHLEIWNAFKEKNFRRAIELARELVRITKIYKIASSFASAVKLAMVAKGFPIRPVLRPPYVIDGEEVFNEIREIVEWRQMLRKESL.

Active-site charge relay system residues include threonine 43 and tyrosine 105. The active-site Proton donor is tyrosine 131. The active-site Schiff-base intermediate with substrate is lysine 159.

Belongs to the DapA family. Homotetramer.

It localises to the cytoplasm. This is an uncharacterized protein from Pyrococcus furiosus (strain ATCC 43587 / DSM 3638 / JCM 8422 / Vc1).